A 78-amino-acid polypeptide reads, in one-letter code: Putative membrane protein insertion efficiency factor (78 aa).

The protein belongs to the UPF0161 family.

Its subcellular location is the cell membrane. Functionally, could be involved in insertion of integral membrane proteins into the membrane. In Bacillus cereus (strain G9842), this protein is Putative membrane protein insertion efficiency factor.